We begin with the raw amino-acid sequence, 157 residues long: Transmembrane protein 50A (157 aa).

Ser2 bears the N-acetylserine mark. Ser2 bears the Phosphoserine mark. The next 4 membrane-spanning stretches (helical) occupy residues 26 to 46, 58 to 78, 95 to 115, and 126 to 146; these read IAAG…AVMY, TCGV…NGQV, IWLF…MWIL, and VVYP…GGLV.

This sequence belongs to the UPF0220 family.

It localises to the membrane. This is Transmembrane protein 50A (Tmem50a) from Mus musculus (Mouse).